We begin with the raw amino-acid sequence, 649 residues long: Sodium/nucleoside cotransporter 1 (649 aa).

Topologically, residues 1–80 are cytoplasmic; sequence MENDPSRRRE…ARSFCREHMQ (80 aa). Residues 81–104 form a helical membrane-spanning segment; it reads LFRWIGTGLLCTGLSAFLLVACLL. Topologically, residues 105-109 are extracellular; it reads DFQRA. Residues 110–128 traverse the membrane as a helical segment; the sequence is LALFVLTCVVLTFLGHRLL. Topologically, residues 129 to 147 are cytoplasmic; sequence KRLLGPKLRRFLKPQGHPR. A helical membrane pass occupies residues 148–167; the sequence is LLLWFKRGLALAAFLGLVLW. At 168 to 178 the chain is on the extracellular side; sequence LSLDTSQRPEQ. Residues 179 to 195 form a helical membrane-spanning segment; the sequence is LVSFAGICVFVALLFAC. Residues 196–201 are Cytoplasmic-facing; the sequence is SKHHCA. Residues 202–222 form a helical membrane-spanning segment; sequence VSWRAVSWGLGLQFVLGLLVI. Over 223–261 the chain is Extracellular; it reads RTEPGFIAFEWLGEQIRIFLSYTKAGSSFVFGEALVKDV. The chain crosses the membrane as a helical span at residues 262 to 283; the sequence is FAFQVLPIIVFFSCVISVLYHV. The Cytoplasmic segment spans residues 284 to 294; sequence GLMQWVILKIA. A helical transmembrane segment spans residues 295 to 318; the sequence is WLMQVTMGTTATETLSVAGNIFVS. The Extracellular portion of the chain corresponds to 319–337; sequence QTEAPLLIRPYLADMTLSE. The chain crosses the membrane as a helical span at residues 338 to 360; the sequence is VHVVMTGGYATIAGSLLGAYISF. The Cytoplasmic segment spans residues 361-366; sequence GIDATS. The helical transmembrane segment at 367–386 threads the bilayer; that stretch reads LIAASVMAAPCALALSKLVY. Topologically, residues 387 to 423 are extracellular; the sequence is PEVEESKFRREEGVKLTYGDAQNLIEAASTGAAISVK. Residues 424 to 446 traverse the membrane as a helical segment; that stretch reads VVANIAANLIAFLAVLDFINAAL. At 447 to 457 the chain is on the cytoplasmic side; the sequence is SWLGDMVDIQG. A helical membrane pass occupies residues 458-479; the sequence is LSFQLICSYILRPVAFLMGVAW. Topologically, residues 480-534 are extracellular; sequence EDCPVVAELLGIKLFLNEFVAYQDLSKYKQRRLAGAEEWVGDRKQWISVRAEVLT. Residues 535–558 form a helical membrane-spanning segment; sequence TFALCGFANFSSIGIMLGGLTSMV. Residues 559 to 569 are Cytoplasmic-facing; sequence PQRKSDFSQIV. The helical transmembrane segment at 570-592 threads the bilayer; it reads LRALFTGACVSLVNACMAGILYM. The Extracellular segment spans residues 593–649; that stretch reads PRGAEVDCMSLLNTTLSSSSFEIYQCCREAFQSVNPEFSPEALDNCCRFYNHTICAQ. Residues asparagine 605 and asparagine 643 are each glycosylated (N-linked (GlcNAc...) asparagine).

It belongs to the concentrative nucleoside transporter (CNT) (TC 2.A.41) family. N-glycosylated. N-glycosylation is required for localization to the plasma membrane and the transporter activity. In terms of tissue distribution, expressed in kidney.

It is found in the cell membrane. Its subcellular location is the apical cell membrane. It carries out the reaction uridine(out) + Na(+)(out) = uridine(in) + Na(+)(in). The enzyme catalyses thymidine(out) + Na(+)(out) = thymidine(in) + Na(+)(in). The catalysed reaction is cytidine(out) + Na(+)(out) = cytidine(in) + Na(+)(in). It catalyses the reaction adenosine(out) + Na(+)(out) = adenosine(in) + Na(+)(in). With respect to regulation, due to its high apparent affinity but slow transport, adenosine could act as a negative regulator of pyrimidine transport under some conditions. In terms of biological role, sodium and pyrimidine nucleoside symporter of the plasma membrane that imports uridine, thymidine and cytidine into cells by coupling their transport to the transmembrane sodium electrochemical gradient. Also transports adenosine, an atypical substrate transported with high apparent affinity, but low maximum velocity. Therefore, exhibits the transport characteristics of the nucleoside transport system cit or N2 subtype (N2/cit). Involved in renal nucleoside (re)absorption. The polypeptide is Sodium/nucleoside cotransporter 1 (Homo sapiens (Human)).